We begin with the raw amino-acid sequence, 209 residues long: uncharacterized protein (209 aa).

Catalysis depends on charge relay system residues serine 119 and histidine 160.

It belongs to the peptidase S51 family.

This is an uncharacterized protein from Listeria innocua serovar 6a (strain ATCC BAA-680 / CLIP 11262).